We begin with the raw amino-acid sequence, 278 residues long: Glutamate racemase (278 aa).

Substrate contacts are provided by residues 25 to 26 (DS) and 57 to 58 (YG). Residue Cys-89 is the Proton donor/acceptor of the active site. 90 to 91 (NT) lines the substrate pocket. The active-site Proton donor/acceptor is the Cys-204. 205 to 206 (TH) lines the substrate pocket.

The protein belongs to the aspartate/glutamate racemases family.

It catalyses the reaction L-glutamate = D-glutamate. It functions in the pathway cell wall biogenesis; peptidoglycan biosynthesis. Functionally, provides the (R)-glutamate required for cell wall biosynthesis. The protein is Glutamate racemase of Brucella anthropi (strain ATCC 49188 / DSM 6882 / CCUG 24695 / JCM 21032 / LMG 3331 / NBRC 15819 / NCTC 12168 / Alc 37) (Ochrobactrum anthropi).